A 411-amino-acid polypeptide reads, in one-letter code: 3-phosphoshikimate 1-carboxyvinyltransferase (411 aa).

Positions 20, 21, and 25 each coordinate 3-phosphoshikimate. Lysine 20 contacts phosphoenolpyruvate. Residues glycine 86 and arginine 114 each coordinate phosphoenolpyruvate. 3-phosphoshikimate contacts are provided by serine 156, serine 157, glutamine 158, serine 181, aspartate 295, and lysine 322. Phosphoenolpyruvate is bound at residue glutamine 158. Aspartate 295 (proton acceptor) is an active-site residue. Positions 326, 367, and 393 each coordinate phosphoenolpyruvate.

The protein belongs to the EPSP synthase family. As to quaternary structure, monomer.

It localises to the cytoplasm. The enzyme catalyses 3-phosphoshikimate + phosphoenolpyruvate = 5-O-(1-carboxyvinyl)-3-phosphoshikimate + phosphate. It functions in the pathway metabolic intermediate biosynthesis; chorismate biosynthesis. Catalyzes the transfer of the enolpyruvyl moiety of phosphoenolpyruvate (PEP) to the 5-hydroxyl of shikimate-3-phosphate (S3P) to produce enolpyruvyl shikimate-3-phosphate and inorganic phosphate. The chain is 3-phosphoshikimate 1-carboxyvinyltransferase from Picrophilus torridus (strain ATCC 700027 / DSM 9790 / JCM 10055 / NBRC 100828 / KAW 2/3).